We begin with the raw amino-acid sequence, 369 residues long: Iron-sulfur cluster assembly SufBD family protein AF_2365 (369 aa).

It belongs to the iron-sulfur cluster assembly SufBD family.

This chain is Iron-sulfur cluster assembly SufBD family protein AF_2365, found in Archaeoglobus fulgidus (strain ATCC 49558 / DSM 4304 / JCM 9628 / NBRC 100126 / VC-16).